The chain runs to 1004 residues: uncharacterized protein (1004 aa).

Asn27 carries an N-linked (GlcNAc...) asparagine glycan. Transmembrane regions (helical) follow at residues 38 to 58 (FGFS…LLAI), 77 to 97 (IVPD…LIVI), 188 to 208 (LSPV…LIAY), and 324 to 344 (FILM…SLFS). Residues Asn392, Asn418, and Asn421 are each glycosylated (N-linked (GlcNAc...) asparagine). 2 helical membrane passes run 422–442 (MSLS…VIAF) and 599–619 (MSNI…IIDM). Asn627 is a glycosylation site (N-linked (GlcNAc...) asparagine). Transmembrane regions (helical) follow at residues 726-746 (GYPL…ISVF) and 823-843 (GDYI…VLGS). Asn859 is a glycosylation site (N-linked (GlcNAc...) asparagine).

The protein to yeast YPR031w.

It is found in the membrane. This is an uncharacterized protein from Schizosaccharomyces pombe (strain 972 / ATCC 24843) (Fission yeast).